Consider the following 277-residue polypeptide: NAD kinase (277 aa).

Catalysis depends on D67, which acts as the Proton acceptor. NAD(+) is bound by residues 67-68 (DG), R72, 137-138 (NE), K148, R165, D167, 178-183 (TGYAMS), L202, and Q236.

The protein belongs to the NAD kinase family. A divalent metal cation serves as cofactor.

It is found in the cytoplasm. It carries out the reaction NAD(+) + ATP = ADP + NADP(+) + H(+). Functionally, involved in the regulation of the intracellular balance of NAD and NADP, and is a key enzyme in the biosynthesis of NADP. Catalyzes specifically the phosphorylation on 2'-hydroxyl of the adenosine moiety of NAD to yield NADP. This Pyrococcus abyssi (strain GE5 / Orsay) protein is NAD kinase.